Here is a 174-residue protein sequence, read N- to C-terminus: Glyoxylase I 4 (174 aa).

Positions 13–135 (SLNHVSVLCR…DGFMIEICNC (123 aa)) constitute a VOC domain. Catalysis depends on E131, which acts as the Proton donor/acceptor.

This sequence belongs to the glyoxalase I family. Mostly expressed in roots, and, to a lower extent, in leaves, flowers, seeds and siliques.

It localises to the cell membrane. Its subcellular location is the cytoplasm. In terms of biological role, involved in the detoxification and scavenging of methylglyoxal (MG), a cytotoxic aldehyde produced in response to primary metabolism alteration observed during biotic and abiotic stresses. Modulates cross-talk between salicylic acid (SA) and jasmonic acid (JA) signaling pathways during defense responses to pathogens such as Botrytis cinerea. This chain is Glyoxylase I 4, found in Arabidopsis thaliana (Mouse-ear cress).